Here is a 445-residue protein sequence, read N- to C-terminus: 3-phosphoshikimate 1-carboxyvinyltransferase (445 aa).

The tract at residues 1–20 (MSTSAAPTPLESRASGPLSG) is disordered. Positions 28, 29, and 33 each coordinate 3-phosphoshikimate. Residue lysine 28 coordinates phosphoenolpyruvate. Phosphoenolpyruvate contacts are provided by glycine 101 and arginine 129. Positions 175, 177, 328, and 355 each coordinate 3-phosphoshikimate. Glutamine 177 contributes to the phosphoenolpyruvate binding site. The active-site Proton acceptor is the aspartate 328. Positions 359 and 402 each coordinate phosphoenolpyruvate.

The protein belongs to the EPSP synthase family. In terms of assembly, monomer.

The protein resides in the cytoplasm. It carries out the reaction 3-phosphoshikimate + phosphoenolpyruvate = 5-O-(1-carboxyvinyl)-3-phosphoshikimate + phosphate. Its pathway is metabolic intermediate biosynthesis; chorismate biosynthesis; chorismate from D-erythrose 4-phosphate and phosphoenolpyruvate: step 6/7. In terms of biological role, catalyzes the transfer of the enolpyruvyl moiety of phosphoenolpyruvate (PEP) to the 5-hydroxyl of shikimate-3-phosphate (S3P) to produce enolpyruvyl shikimate-3-phosphate and inorganic phosphate. The chain is 3-phosphoshikimate 1-carboxyvinyltransferase from Bradyrhizobium sp. (strain ORS 278).